The primary structure comprises 307 residues: Transcription initiation factor IIF subunit beta (307 aa).

Over residues 1-12 (MSEEKPTVRTEE) the composition is skewed to basic and acidic residues. Disordered stretches follow at residues 1-22 (MSEE…DAGD) and 261-307 (VELR…IDVV). Over residues 13-22 (DDRYEDDAGD) the composition is skewed to acidic residues. The segment covering 263 to 290 (LRNQQASQSESSSIDHTGKNTSPDNPGT) has biased composition (polar residues). Residues 292-307 (AEEDEDDDGVEMIDVV) show a composition bias toward acidic residues.

The protein belongs to the TFIIF beta subunit family. As to quaternary structure, component of the fcp1/TFIIF/polII complex via interaction of tfg3 with both tfg1/TFIIF-alpha and tfg2/TFIIF-beta subunits.

It localises to the nucleus. In terms of biological role, TFIIF is a general transcription initiation factor that binds to RNA polymerase II and helps to recruit it to the initiation complex in collaboration with TFIIB. It promotes transcription elongation. This chain is Transcription initiation factor IIF subunit beta (tfg2), found in Schizosaccharomyces pombe (strain 972 / ATCC 24843) (Fission yeast).